A 531-amino-acid polypeptide reads, in one-letter code: Cytochrome c oxidase subunit 1 (531 aa).

Residues isoleucine 18 to isoleucine 38 form a helical membrane-spanning segment. The Ca(2+) site is built by glutamate 41 and glycine 46. The next 6 helical transmembrane spans lie at valine 59–glycine 79, isoleucine 103–threonine 123, alanine 149–valine 169, proline 185–leucine 205, leucine 237–isoleucine 257, and isoleucine 269–valine 289. Residue histidine 64 participates in Fe(II)-heme a binding. Cu cation is bound at residue histidine 243. Positions histidine 243–tyrosine 247 form a cross-link, 1'-histidyl-3'-tyrosine (His-Tyr). Tyrosine 247 contributes to the O2 binding site. Cu cation-binding residues include histidine 292 and histidine 293. Transmembrane regions (helical) follow at residues methionine 312 to glycine 332 and methionine 340 to leucine 360. Mg(2+) is bound by residues histidine 370 and aspartate 371. Histidine 378 serves as a coordination point for heme a3. Fe(II)-heme a is bound at residue histidine 380. The next 2 membrane-spanning stretches (helical) occupy residues methionine 385–leucine 405 and valine 414–glycine 434. Proline 443 contributes to the Ca(2+) binding site. A helical transmembrane segment spans residues tryptophan 458 to leucine 478.

This sequence belongs to the heme-copper respiratory oxidase family. Component of the cytochrome c oxidase (complex IV, CIV), a multisubunit enzyme composed of a catalytic core of 3 subunits and several supernumerary subunits. The complex exists as a monomer or a dimer and forms supercomplexes (SCs) in the inner mitochondrial membrane with ubiquinol-cytochrome c oxidoreductase (cytochrome b-c1 complex, complex III, CIII). Requires heme as cofactor. The cofactor is Cu cation.

The protein localises to the mitochondrion inner membrane. It catalyses the reaction 4 Fe(II)-[cytochrome c] + O2 + 8 H(+)(in) = 4 Fe(III)-[cytochrome c] + 2 H2O + 4 H(+)(out). Its pathway is energy metabolism; oxidative phosphorylation. In terms of biological role, component of the cytochrome c oxidase, the last enzyme in the mitochondrial electron transport chain which drives oxidative phosphorylation. The respiratory chain contains 3 multisubunit complexes succinate dehydrogenase (complex II, CII), ubiquinol-cytochrome c oxidoreductase (cytochrome b-c1 complex, complex III, CIII) and cytochrome c oxidase (complex IV, CIV), that cooperate to transfer electrons derived from NADH and succinate to molecular oxygen, creating an electrochemical gradient over the inner membrane that drives transmembrane transport and the ATP synthase. Cytochrome c oxidase is the component of the respiratory chain that catalyzes the reduction of oxygen to water. Electrons originating from reduced cytochrome c in the intermembrane space (IMS) are transferred via the dinuclear copper A center (CU(A)) of subunit 2 and heme A of subunit 1 to the active site in subunit 1, a binuclear center (BNC) formed by heme A3 and copper B (CU(B)). The BNC reduces molecular oxygen to 2 water molecules using 4 electrons from cytochrome c in the IMS and 4 protons from the mitochondrial matrix. In Candida albicans (strain SC5314 / ATCC MYA-2876) (Yeast), this protein is Cytochrome c oxidase subunit 1 (COX1).